We begin with the raw amino-acid sequence, 198 residues long: MSASAAILLAASESGHSDENVLIPPLSELLIGTLAFGLLVAFFFWKIRPQIARTYAQRTERIEGGIARAEAAQREAQALLEQYRAQLTEARAEAARIRDDAHTEGRQIVEELRASAQREIAEIKERADAQLAADRAQIVAQVRREVGVIAIDLASKIVGYQVESTATQARLVDDFIAALDNSAEGAGSSTPAPVGSGG.

Residues 25–45 (PLSELLIGTLAFGLLVAFFFW) form a helical membrane-spanning segment.

It belongs to the ATPase B chain family. F-type ATPases have 2 components, F(1) - the catalytic core - and F(0) - the membrane proton channel. F(1) has five subunits: alpha(3), beta(3), gamma(1), delta(1), epsilon(1). F(0) has three main subunits: a(1), b(2) and c(10-14). The alpha and beta chains form an alternating ring which encloses part of the gamma chain. F(1) is attached to F(0) by a central stalk formed by the gamma and epsilon chains, while a peripheral stalk is formed by the delta and b chains.

It localises to the cell membrane. Its function is as follows. F(1)F(0) ATP synthase produces ATP from ADP in the presence of a proton or sodium gradient. F-type ATPases consist of two structural domains, F(1) containing the extramembraneous catalytic core and F(0) containing the membrane proton channel, linked together by a central stalk and a peripheral stalk. During catalysis, ATP synthesis in the catalytic domain of F(1) is coupled via a rotary mechanism of the central stalk subunits to proton translocation. In terms of biological role, component of the F(0) channel, it forms part of the peripheral stalk, linking F(1) to F(0). This Frankia alni (strain DSM 45986 / CECT 9034 / ACN14a) protein is ATP synthase subunit b.